We begin with the raw amino-acid sequence, 375 residues long: Histidine biosynthesis bifunctional protein HisB (375 aa).

The histidinol-phosphatase stretch occupies residues 1 to 168 (MTPILFVDRD…GIAHELADAP (168 aa)). Aspartate 8 acts as the Nucleophile in catalysis. Residues aspartate 8, aspartate 10, and aspartate 128 each coordinate Mg(2+). The Proton donor role is filled by aspartate 10. The imidazoleglycerol-phosphate dehydratase stretch occupies residues 169-375 (RRAVVQRNTK…SALPTTKGAL (207 aa)).

This sequence in the N-terminal section; belongs to the histidinol-phosphatase family. It in the C-terminal section; belongs to the imidazoleglycerol-phosphate dehydratase family. Mg(2+) is required as a cofactor.

The protein resides in the cytoplasm. It carries out the reaction D-erythro-1-(imidazol-4-yl)glycerol 3-phosphate = 3-(imidazol-4-yl)-2-oxopropyl phosphate + H2O. It catalyses the reaction L-histidinol phosphate + H2O = L-histidinol + phosphate. It functions in the pathway amino-acid biosynthesis; L-histidine biosynthesis; L-histidine from 5-phospho-alpha-D-ribose 1-diphosphate: step 6/9. Its pathway is amino-acid biosynthesis; L-histidine biosynthesis; L-histidine from 5-phospho-alpha-D-ribose 1-diphosphate: step 8/9. The sequence is that of Histidine biosynthesis bifunctional protein HisB from Xanthomonas oryzae pv. oryzae (strain MAFF 311018).